The sequence spans 172 residues: uncharacterized protein (172 aa).

The region spanning 3–171 is the PfpI endopeptidase domain; that stretch reads KKVAIILSNE…FNREIVKQLQ (169 aa).

This sequence belongs to the peptidase C56 family.

This is an uncharacterized protein from Staphylococcus haemolyticus (strain JCSC1435).